A 163-amino-acid polypeptide reads, in one-letter code: Probable ribosome biogenesis protein RLP24 (163 aa).

Belongs to the eukaryotic ribosomal protein eL24 family. Associated with nucleolar and cytoplasmic pre-60S particles. At the end of biogenesis it dissociates from cytoplasmic pre-60S particles and is likely to be exchanged for its ribosomal homolog, RPL24.

The protein resides in the nucleus. The protein localises to the nucleolus. Its function is as follows. Involved in the biogenesis of the 60S ribosomal subunit. Ensures the docking of GTPBP4/NOG1 to pre-60S particles. This chain is Probable ribosome biogenesis protein RLP24 (Rsl24d1), found in Mus musculus (Mouse).